Consider the following 132-residue polypeptide: N,N-dimethylformamidase alpha subunit (132 aa).

In terms of assembly, heterotetramer of two DmfA1 (alpha) and two DmfA2 (beta) subunits.

It catalyses the reaction N,N-dimethylformamide + H2O = dimethylamine + formate. With respect to regulation, activity is slightly inhibited by Mg(2+) and Mn(2+), and slightly increased by Cu(2+). Activity is slightly inhibited by the chelating agents 8-hydroxyquinoline, ethylenediaminetetraacetate, o-phenanthroline and 2,2'-bipyridyl. Functionally, hydrolyzes N,N-dimethylformamide, and to a lesser extent N,N-dimethylacetamide and N,N-diethylacetamide. Has no activity against the substituted amides N-methylformamide, N-ethylformamide, N-ethylformamide and N-methylacetamide or the unsubstituted amides formamide, nicotinamide, acetoamide, benzamide, acetamide and acrylamide. The chain is N,N-dimethylformamidase alpha subunit from Alcaligenes sp.